We begin with the raw amino-acid sequence, 348 residues long: MTTLQGKSITVHDMTLRDGMHPKRHLMTLDQMRTIAQGLDAAGVPLIEVTHGDGLGGSSLNYGFPAHSDEEYLGAVIPLMKQAKVSALLLPGIGTVDHLKMARELGVHTIRVATHCTEADVSEQHISYARKLDMDTVGFLMMAHMNSPEGLVKQAKLMESYGANCIYITDSAGYMLPDDVKVRLSAVREALKPETELGFHGHHNLAMGIANSIAAIECGATRIDAAAAGLGAGAGNTPMEVLVAVCDRMGIRTGVDVWKIQDVAEDLVVPIMDFPIRIDRDALTLGYAGVYGSFLLFAKRAEKKYGVPARDLLVELGRRGMVGGQEDMIEDTALTMARQRGLLPEQAA.

Residues 9-261 (ITVHDMTLRD…RTGVDVWKIQ (253 aa)) enclose the Pyruvate carboxyltransferase domain. 17–18 (RD) contacts substrate. Mn(2+) is bound at residue Asp18. His21 (proton acceptor) is an active-site residue. Substrate contacts are provided by Ser171 and His200. The Mn(2+) site is built by His200 and His202. Tyr291 provides a ligand contact to substrate.

This sequence belongs to the 4-hydroxy-2-oxovalerate aldolase family.

The enzyme catalyses (S)-4-hydroxy-2-oxopentanoate = acetaldehyde + pyruvate. This is 4-hydroxy-2-oxovalerate aldolase from Ralstonia pickettii (strain 12J).